The chain runs to 197 residues: ATP-dependent Clp protease proteolytic subunit 3 (197 aa).

Ser96 acts as the Nucleophile in catalysis. Residue His121 is part of the active site.

Belongs to the peptidase S14 family. As to quaternary structure, fourteen ClpP subunits assemble into 2 heptameric rings which stack back to back to give a disk-like structure with a central cavity, resembling the structure of eukaryotic proteasomes.

The protein localises to the cytoplasm. The enzyme catalyses Hydrolysis of proteins to small peptides in the presence of ATP and magnesium. alpha-casein is the usual test substrate. In the absence of ATP, only oligopeptides shorter than five residues are hydrolyzed (such as succinyl-Leu-Tyr-|-NHMec, and Leu-Tyr-Leu-|-Tyr-Trp, in which cleavage of the -Tyr-|-Leu- and -Tyr-|-Trp bonds also occurs).. In terms of biological role, cleaves peptides in various proteins in a process that requires ATP hydrolysis. Has a chymotrypsin-like activity. Plays a major role in the degradation of misfolded proteins. The protein is ATP-dependent Clp protease proteolytic subunit 3 of Prochlorococcus marinus (strain MIT 9313).